We begin with the raw amino-acid sequence, 295 residues long: Cyclin-G1 (295 aa).

This sequence belongs to the cyclin family. Cyclin G subfamily. In terms of tissue distribution, high levels in skeletal muscle, ovary, kidney and colon.

The protein localises to the nucleus. Its function is as follows. May play a role in growth regulation. Is associated with G2/M phase arrest in response to DNA damage. May be an intermediate by which p53 mediates its role as an inhibitor of cellular proliferation. This chain is Cyclin-G1 (CCNG1), found in Homo sapiens (Human).